Here is a 395-residue protein sequence, read N- to C-terminus: ATP phosphoribosyltransferase regulatory subunit (395 aa).

The protein belongs to the class-II aminoacyl-tRNA synthetase family. HisZ subfamily. In terms of assembly, heteromultimer composed of HisG and HisZ subunits.

It is found in the cytoplasm. Its pathway is amino-acid biosynthesis; L-histidine biosynthesis; L-histidine from 5-phospho-alpha-D-ribose 1-diphosphate: step 1/9. Its function is as follows. Required for the first step of histidine biosynthesis. May allow the feedback regulation of ATP phosphoribosyltransferase activity by histidine. This Pseudomonas syringae pv. tomato (strain ATCC BAA-871 / DC3000) protein is ATP phosphoribosyltransferase regulatory subunit.